Here is a 258-residue protein sequence, read N- to C-terminus: MQALHLQHRNPRSYRVKARASYVDETLFGSPTGTRPTLPDFDPPWVQNCNRSRGVSPGPPKVSLAKRDCESPSSRGSTPNLTPRKKNKYRLIGHTPSYCDESLFGSRPQGTSKERSRTAVEDAAKLRTLFWTPPATPRGSHSPRPRETPLRAIHPTGPPRTEPRVATGSQMVSRDGLDAPRSLGQRRSYSLTHLAVPSTGHPASTAPQTNGPWSPRPYTSGATVQSPLVTRKVCSGSVSGPTTPQRGACPQKPKPPWK.

3 disordered regions span residues 28–86 (FGSP…PRKK), 132–182 (TPPA…APRS), and 195–258 (AVPS…PPWK). A compositionally biased stretch (polar residues) spans 71–81 (SPSSRGSTPNL). The Nuclear localization signal motif lies at 81 to 97 (LTPRKKNKYRLIGHTPS). The segment at 117–145 (RTAVEDAAKLRTLFWTPPATPRGSHSPRP) is interaction with RBPJ/RBPSUH. Residues 145-258 (PRETPLRAIH…CPQKPKPPWK (114 aa)) form an interaction with tubulin region. 2 stretches are compositionally biased toward polar residues: residues 201–212 (HPASTAPQTNGP) and 236–245 (GSVSGPTTPQ).

It belongs to the RITA family. As to quaternary structure, interacts with RBPJ/RBPSUH.

Its subcellular location is the cytoplasm. The protein resides in the nucleus. The protein localises to the cytoskeleton. It localises to the microtubule organizing center. It is found in the centrosome. Functionally, tubulin-binding protein that acts as a negative regulator of Notch signaling pathway. Shuttles between the cytoplasm and the nucleus and mediates the nuclear export of RBPJ/RBPSUH, thereby preventing the interaction between RBPJ/RBPSUH and NICD product of Notch proteins (Notch intracellular domain), leading to down-regulate Notch-mediated transcription. May play a role in neurogenesis. This chain is RBPJ-interacting and tubulin-associated protein 1 (Rita1), found in Rattus norvegicus (Rat).